The sequence spans 205 residues: MLTDYEEQLWNSMERICGIDEAGRGPLAGPVVAAAVVFPRWFRPGKGILGRMNDSKKLSPSLRREMAPAIQDAALAWSVSVVDAQTIDRINILSATMLAMNRAVGGLGLTPDMLLVDGNRFSPETPVAYRTLVGGDAYIYSIAAASVLAKTARDAIMSSYDRDYPEYGFARHAGYPTAMHISAIRQHGRCPIHRFSFKVRRLNEA.

The RNase H type-2 domain maps to Glu14–Ala205. Asp20, Glu21, and Asp117 together coordinate a divalent metal cation.

This sequence belongs to the RNase HII family. Mn(2+) serves as cofactor. It depends on Mg(2+) as a cofactor.

It is found in the cytoplasm. The catalysed reaction is Endonucleolytic cleavage to 5'-phosphomonoester.. In terms of biological role, endonuclease that specifically degrades the RNA of RNA-DNA hybrids. The chain is Ribonuclease HII from Chlorobium phaeovibrioides (strain DSM 265 / 1930) (Prosthecochloris vibrioformis (strain DSM 265)).